Here is a 215-residue protein sequence, read N- to C-terminus: Disulfide-bond oxidoreductase YfcG (215 aa).

The GST N-terminal domain occupies 1 to 87 (MIDLYFAPTP…YLAEKTGLFL (87 aa)). Residues Asn-11, Gln-38, Arg-40, Ile-52, 71-72 (ES), and Arg-132 each bind glutathione. In terms of domain architecture, GST C-terminal spans 90–215 (ETRERAATLQ…AQLGDERSDS (126 aa)).

Belongs to the GST superfamily. Nu-class GSH transferase family. In terms of assembly, homodimer.

Its function is as follows. Exhibits a very robust glutathione (GSH)-dependent disulfide-bond reductase activity toward the model substrate, 2-hydroxyethyl disulfide; the actual physiological substrates are not known. Also has a low GSH-dependent hydroperoxidase activity toward cumene hydroperoxide, but does not reduce H(2)O(2), tert-butyl hydroperoxide, benzyl peroxide, or lauroyl peroxide. Exhibits little or no GSH transferase activity with most typical electrophilic substrates, and has no detectable transferase activity using glutathionylspermidine (GspSH) as the nucleophilic substrate. Is involved in defense against oxidative stress, probably via its peroxidase activity. The protein is Disulfide-bond oxidoreductase YfcG (yfcG) of Escherichia coli (strain K12).